The following is a 426-amino-acid chain: Serine hydroxymethyltransferase (426 aa).

(6S)-5,6,7,8-tetrahydrofolate is bound by residues L111 and 115–117; that span reads GHL. At K220 the chain carries N6-(pyridoxal phosphate)lysine.

It belongs to the SHMT family. In terms of assembly, homodimer. Pyridoxal 5'-phosphate is required as a cofactor.

It localises to the cytoplasm. It catalyses the reaction (6R)-5,10-methylene-5,6,7,8-tetrahydrofolate + glycine + H2O = (6S)-5,6,7,8-tetrahydrofolate + L-serine. The protein operates within one-carbon metabolism; tetrahydrofolate interconversion. It functions in the pathway amino-acid biosynthesis; glycine biosynthesis; glycine from L-serine: step 1/1. In terms of biological role, catalyzes the reversible interconversion of serine and glycine with tetrahydrofolate (THF) serving as the one-carbon carrier. This reaction serves as the major source of one-carbon groups required for the biosynthesis of purines, thymidylate, methionine, and other important biomolecules. Also exhibits THF-independent aldolase activity toward beta-hydroxyamino acids, producing glycine and aldehydes, via a retro-aldol mechanism. This is Serine hydroxymethyltransferase from Orientia tsutsugamushi (strain Ikeda) (Rickettsia tsutsugamushi).